The chain runs to 378 residues: Putative monoglyceride lipase (378 aa).

A GXSXG motif is present at residues 97–101 (GHSMG). Residue Ser-99 is the Nucleophile of the active site. Catalysis depends on charge relay system residues Asp-219 and His-249. Residues 276–292 (PSETVKSEQETAVEHPK) are compositionally biased toward basic and acidic residues. A disordered region spans residues 276–350 (PSETVKSEQE…TSESTTVPET (75 aa)). Low complexity predominate over residues 293–305 (PTATTSAPSASPT). Ser-301 is modified (phosphoserine). The span at 341–350 (TSESTTVPET) shows a compositional bias: polar residues.

Belongs to the AB hydrolase superfamily. Monoacylglycerol lipase family.

It localises to the lipid droplet. Its subcellular location is the cytoplasm. It is found in the endoplasmic reticulum. The protein resides in the mitochondrion outer membrane. The catalysed reaction is Hydrolyzes glycerol monoesters of long-chain fatty acids.. It participates in glycerolipid metabolism; triacylglycerol degradation. In terms of biological role, converts monoacylglycerides (MAG) to free fatty acids and glycerol. Has a strong preference for monounsaturated monoglycerides. Required for efficient degradation of MAG, short-lived intermediates of glycerolipid metabolism which may also function as lipid signaling molecules. Controls inactivation of the signaling lipid N-palmitoylethanolamine (PEA). Involved in fatty acid ethyl ester (FAEE) catabolism. FAEEs are non-oxidative metabolites of ethanol that are transiently incorporated into lipid droplets (LDs). Their mobilization by LD-resident FAEE hydrolases facilitates a controlled metabolism of these potentially toxic lipid metabolites. The chain is Putative monoglyceride lipase (mgl1) from Schizosaccharomyces pombe (strain 972 / ATCC 24843) (Fission yeast).